We begin with the raw amino-acid sequence, 487 residues long: 3-octaprenyl-4-hydroxybenzoate carboxy-lyase (487 aa).

Residue asparagine 172 coordinates Mn(2+). Prenylated FMN-binding positions include 175 to 177 (IYR), 189 to 191 (RWL), and 194 to 195 (RG). Glutamate 238 is a Mn(2+) binding site. The Proton donor role is filled by aspartate 287.

It belongs to the UbiD family. Homohexamer. Prenylated FMN serves as cofactor. The cofactor is Mn(2+).

Its subcellular location is the cell membrane. It carries out the reaction a 4-hydroxy-3-(all-trans-polyprenyl)benzoate + H(+) = a 2-(all-trans-polyprenyl)phenol + CO2. It functions in the pathway cofactor biosynthesis; ubiquinone biosynthesis. In terms of biological role, catalyzes the decarboxylation of 3-octaprenyl-4-hydroxy benzoate to 2-octaprenylphenol, an intermediate step in ubiquinone biosynthesis. This is 3-octaprenyl-4-hydroxybenzoate carboxy-lyase from Nitrosomonas eutropha (strain DSM 101675 / C91 / Nm57).